Here is a 309-residue protein sequence, read N- to C-terminus: Probable lipid kinase YegS-like (309 aa).

The DAGKc domain occupies 1–133 (MPLTHIRLLL…IDIIRANNNY (133 aa)). Residues Ser-39, 65 to 71 (GDGSLNE), and Thr-95 contribute to the ATP site. Positions 214, 217, and 219 each coordinate Mg(2+). Residue Glu-273 is the Proton acceptor of the active site.

The protein belongs to the diacylglycerol/lipid kinase family. YegS lipid kinase subfamily. Requires Mg(2+) as cofactor. The cofactor is Ca(2+).

The protein resides in the cytoplasm. In terms of biological role, probably phosphorylates lipids; the in vivo substrate is unknown. The sequence is that of Probable lipid kinase YegS-like from Shewanella frigidimarina (strain NCIMB 400).